We begin with the raw amino-acid sequence, 804 residues long: Exocyst complex component 6 (804 aa).

Belongs to the SEC15 family. In terms of assembly, the exocyst complex is composed of EXOC1, EXOC2, EXOC3, EXOC4, EXOC5, EXOC6, EXOC7 and EXOC8. Interacts with CNTRL. Interacts with RAB11A in a GTP-dependent manner.

The protein localises to the cytoplasm. The protein resides in the perinuclear region. It localises to the cell projection. Its subcellular location is the growth cone. It is found in the midbody. The protein localises to the midbody ring. Its function is as follows. Component of the exocyst complex involved in the docking of exocytic vesicles with fusion sites on the plasma membrane. Together with RAB11A, RAB3IP, RAB8A, PARD3, PRKCI, ANXA2, CDC42 and DNMBP promotes transcytosis of PODXL to the apical membrane initiation sites (AMIS), apical surface formation and lumenogenesis. In Homo sapiens (Human), this protein is Exocyst complex component 6 (EXOC6).